A 141-amino-acid chain; its full sequence is Large ribosomal subunit protein uL16 (141 aa).

The segment covering 1-17 has biased composition (basic residues); that stretch reads MLQPKRTKYRKVQKGRM. A disordered region spans residues 1-29; that stretch reads MLQPKRTKYRKVQKGRMKGNSQRGHELSN.

The protein belongs to the universal ribosomal protein uL16 family. Part of the 50S ribosomal subunit.

In terms of biological role, binds 23S rRNA and is also seen to make contacts with the A and possibly P site tRNAs. This chain is Large ribosomal subunit protein uL16, found in Flavobacterium johnsoniae (strain ATCC 17061 / DSM 2064 / JCM 8514 / BCRC 14874 / CCUG 350202 / NBRC 14942 / NCIMB 11054 / UW101) (Cytophaga johnsonae).